The sequence spans 66 residues: Large ribosomal subunit protein uL29 (66 aa).

The protein belongs to the universal ribosomal protein uL29 family.

In Hydrogenobaculum sp. (strain Y04AAS1), this protein is Large ribosomal subunit protein uL29.